The primary structure comprises 476 residues: Ubiquinone biosynthesis monooxygenase COQ6, mitochondrial (476 aa).

A mitochondrion-targeting transit peptide spans 1–35 (MAARIGSMAGLLCVRWWSSAQLAARGGPLVASQRW). An N6-succinyllysine modification is found at Lys-219.

Belongs to the UbiH/COQ6 family. In terms of assembly, component of a multi-subunit COQ enzyme complex, composed of at least COQ3, COQ4, COQ5, COQ6, COQ7 and COQ9. Interacts with COQ8B and COQ7. The cofactor is FAD. In terms of tissue distribution, expressed in the kidney, in podocytes.

It is found in the mitochondrion inner membrane. The protein resides in the golgi apparatus. The protein localises to the cell projection. The catalysed reaction is 4-hydroxy-3-(all-trans-decaprenyl)benzoate + 2 reduced [2Fe-2S]-[ferredoxin] + O2 + 2 H(+) = 3,4-dihydroxy-5-(all-trans-decaprenyl)benzoate + 2 oxidized [2Fe-2S]-[ferredoxin] + H2O. It catalyses the reaction 2-methoxy-6-(all-trans-decaprenyl)phenol + 2 reduced [2Fe-2S]-[ferredoxin] + O2 + 2 H(+) = 2-methoxy-6-(all-trans-decaprenyl)benzene-1,4-diol + 2 oxidized [2Fe-2S]-[ferredoxin] + H2O. It participates in cofactor biosynthesis; ubiquinone biosynthesis. Functionally, FAD-dependent monooxygenase required for two non-consecutive steps during ubiquinone biosynthesis. Required for the C5-ring hydroxylation during ubiquinone biosynthesis by catalyzing the hydroxylation of 4-hydroxy-3-(all-trans-decaprenyl)benzoic acid to 3,4-dihydroxy-5-(all-trans-decaprenyl)benzoic acid. Also acts downstream of COQ4, for the C1-hydroxylation during ubiquinone biosynthesis by catalyzing the hydroxylation of 2-methoxy-6-(all-trans-decaprenyl)phenol to 2-methoxy-6-(all-trans-decaprenyl)benzene-1,4-diol. The electrons required for the hydroxylation reaction are funneled indirectly to COQ6 from NADPH via a ferredoxin/ferredoxin reductase system composed of FDX2 and FDXR. The sequence is that of Ubiquinone biosynthesis monooxygenase COQ6, mitochondrial from Mus musculus (Mouse).